A 199-amino-acid chain; its full sequence is Small ribosomal subunit protein eS6 (199 aa).

The segment covering 172-183 (KEQREKRSESLA) has biased composition (basic and acidic residues). The disordered stretch occupies residues 172-199 (KEQREKRSESLAKKRSRLSAASKPSIAA).

It belongs to the eukaryotic ribosomal protein eS6 family. In terms of processing, ribosomal protein S6 is the major substrate of protein kinases in eukaryote ribosomes.

Component of the 40S small ribosomal subunit. Plays an important role in controlling cell growth and proliferation through the selective translation of particular classes of mRNA. The protein is Small ribosomal subunit protein eS6 (RPS6) of Nicotiana tabacum (Common tobacco).